Here is an 894-residue protein sequence, read N- to C-terminus: MTQYTPMIQQYLKVKADYQDAFLFFRLGDFYEMFFEDAVKAAHELEITLTSRDGGSSERIPMCGVPYHAAKNYIEQLVEKGYKVAVCEQVEDPKTAKGVVRREVVQLITPGTMMEGRTIDEKENNFLAALTHFEDGSYALACNDLTTGQNTVTLLTGSVEDILLEVYATGSKEIVVDSSFSKDELNKLTETLKMTISYEDATAIPEGLEHLVKNVSQAKLIKAVGRLFNYVIRTQKRSLDHLQPVEIYYTNQFMKIDVHSKRNLELTETLRTKEKTGSLLWLLDKTKTAMGGRMLKQWMERPLIQKERIEERLEMVETFVNDYFLREDLKEKLKEVYDLERLAGKVAFGNVNARDLLQLRRSLLQVPAILEAISLLDNAYAARLIQGADPCESLTELLGRSIQENPPLSIKDGDIIKDGYNDKLDQYRYVSKNGKTWIAELEKRERDITGIKSLKIGYNRIFGYYIEVTKANLGALPEGRYERKQTLANAERFITDELKEKETLILEAEEKIVQLEYDLFTALREEVKVFIPKLQHLAKVISELDVLQSFATVSEEEQFVKPVLTTKREIFIKDGRHPVVEKVLNGKLYVPNDCIMPEKMDVFLITGPNMSGKSTYMRQLALVTVMSQIGCFVPATEAVLPVFDQIFTRIGAADDLISGQSTFMVEMLEAKNAIANASERSLILFDEIGRGTSTYDGMALAQAIIEHIHDQIGAKTLFSTHYHELTVLEDSLDQLKNVHVSAIEENGKVVFLHKIQDGAADKSYGIHVAQLAELPDSLIARAKEVLAQLEGQEEIIIPKRVEVKAQEQEQEVIPEPIVVKEEPVEIEETKVDNEEESQLSFFGAEHSSKKQDKPVLDAKETAVLSQIKKIDLLDMTPLEAMNELYRLQKKLKKG.

Residue 607 to 614 (GPNMSGKS) participates in ATP binding.

This sequence belongs to the DNA mismatch repair MutS family.

This protein is involved in the repair of mismatches in DNA. It is possible that it carries out the mismatch recognition step. This protein has a weak ATPase activity. In Bacillus cereus (strain ZK / E33L), this protein is DNA mismatch repair protein MutS.